Reading from the N-terminus, the 292-residue chain is 2-(5''-triphosphoribosyl)-3'-dephosphocoenzyme-A synthase (292 aa).

This sequence belongs to the CitG/MdcB family.

It catalyses the reaction 3'-dephospho-CoA + ATP = 2'-(5''-triphospho-alpha-D-ribosyl)-3'-dephospho-CoA + adenine. In terms of biological role, catalyzes the formation of 2-(5''-triphosphoribosyl)-3'-dephosphocoenzyme-A, the precursor of the prosthetic group of the holo-acyl carrier protein (gamma chain) of citrate lyase, from ATP and dephospho-CoA. The polypeptide is 2-(5''-triphosphoribosyl)-3'-dephosphocoenzyme-A synthase (Escherichia coli O139:H28 (strain E24377A / ETEC)).